The chain runs to 206 residues: MVVVMKFFRWVRRAWQRIISWVFFWRQKIKPTISGHPDSKKHSLKKMEKTLQVVETLRLVELPKEAKPKLGESPELADPCVLAKTTEETEVELGQQGQSLLQLPRTAVKSVSTLMVSALQSGWQMCSWKSSVSSASVSSQVRTQSPLKTPEAELLWEVYLVLWAVRKHLRRLYRRQERHRRHHVRCHAAPRPNPAQSLKLDAQSPL.

Positions 180–206 (RRHHVRCHAAPRPNPAQSLKLDAQSPL) are disordered.

In terms of tissue distribution, expressed in sperm (at protein level).

The protein localises to the cytoplasmic vesicle. It is found in the secretory vesicle. It localises to the acrosome. Its function is as follows. May play a role in acrosome formation and nucleus shaping during spermiogenesis. This Homo sapiens (Human) protein is Sperm acrosome developmental regulator.